Consider the following 431-residue polypeptide: Enolase (431 aa).

Position 167 (Gln167) interacts with (2R)-2-phosphoglycerate. Glu209 (proton donor) is an active-site residue. The Mg(2+) site is built by Asp246, Glu289, and Asp316. Residues Lys341, Arg370, Ser371, and Lys392 each contribute to the (2R)-2-phosphoglycerate site. Lys341 (proton acceptor) is an active-site residue.

Belongs to the enolase family. As to quaternary structure, component of the RNA degradosome, a multiprotein complex involved in RNA processing and mRNA degradation. Mg(2+) is required as a cofactor.

It is found in the cytoplasm. Its subcellular location is the secreted. The protein resides in the cell surface. The catalysed reaction is (2R)-2-phosphoglycerate = phosphoenolpyruvate + H2O. The protein operates within carbohydrate degradation; glycolysis; pyruvate from D-glyceraldehyde 3-phosphate: step 4/5. Its function is as follows. Catalyzes the reversible conversion of 2-phosphoglycerate (2-PG) into phosphoenolpyruvate (PEP). It is essential for the degradation of carbohydrates via glycolysis. This Shewanella pealeana (strain ATCC 700345 / ANG-SQ1) protein is Enolase.